Here is a 716-residue protein sequence, read N- to C-terminus: Exocyst complex component 8 (716 aa).

Position 15 is a phosphoserine (Ser15). Residues 129 to 150 (GFLPGPAGVPREGSGTGEEGKQ) form a disordered region. One can recognise a PH domain in the interval 173-273 (YLVYNGDLVE…WLEVLEETKR (101 aa)). Residues 275–284 (LSDKRRREQE) show a composition bias toward basic and acidic residues. Positions 275–319 (LSDKRRREQEEAAAPRAPPPVTSKGSNPFEDEDDEELATPEAEEE) are disordered. Residues 303-319 (FEDEDDEELATPEAEEE) are compositionally biased toward acidic residues. At Thr313 the chain carries Phosphothreonine.

This sequence belongs to the EXO84 family. In terms of assembly, the exocyst complex is composed of EXOC1, EXOC2, EXOC3, EXOC4, EXOC5, EXOC6, EXOC7 and EXOC8. Interacts (via PH domain) with GTP-bound RALA and RALB. Interacts with SH3BP1; required for the localization of both SH3BP1 and the exocyst to the leading edge of migrating cells.

It localises to the cytoplasm. The protein localises to the perinuclear region. Its subcellular location is the cell projection. The protein resides in the growth cone. Its function is as follows. Component of the exocyst complex involved in the docking of exocytic vesicles with fusion sites on the plasma membrane. This is Exocyst complex component 8 (Exoc8) from Mus musculus (Mouse).